A 366-amino-acid polypeptide reads, in one-letter code: Glycerol-3-phosphate dehydrogenase [NAD(+)], glycosomal (366 aa).

NAD(+) is bound by residues 22 to 27 (GSGAFG), Phe97, Lys125, and Ala157. Position 125 (Lys125) interacts with substrate. Lys210 (proton acceptor) is an active-site residue. Residues Arg274, Val298, and Glu300 each contribute to the NAD(+) site. A substrate-binding site is contributed by 274–275 (RN). Residues 364-366 (SKL) carry the Microbody targeting signal motif.

It belongs to the NAD-dependent glycerol-3-phosphate dehydrogenase family. Homodimer.

The protein localises to the glycosome. It carries out the reaction sn-glycerol 3-phosphate + NAD(+) = dihydroxyacetone phosphate + NADH + H(+). This chain is Glycerol-3-phosphate dehydrogenase [NAD(+)], glycosomal (GPD), found in Leishmania mexicana.